We begin with the raw amino-acid sequence, 88 residues long: Phosphocarrier protein HPr (88 aa).

Residues 1-88 (MKKIQVVVKD…KAVLEKHQVI (88 aa)) form the HPr domain. Catalysis depends on His15, which acts as the Pros-phosphohistidine intermediate. Ser47 is subject to Phosphoserine; by HPrK/P.

This sequence belongs to the HPr family.

Its subcellular location is the cytoplasm. With respect to regulation, phosphorylation on Ser-47 inhibits the phosphoryl transfer from enzyme I to HPr. In terms of biological role, general (non sugar-specific) component of the phosphoenolpyruvate-dependent sugar phosphotransferase system (sugar PTS). This major carbohydrate active-transport system catalyzes the phosphorylation of incoming sugar substrates concomitantly with their translocation across the cell membrane. The phosphoryl group from phosphoenolpyruvate (PEP) is transferred to the phosphoryl carrier protein HPr by enzyme I. Phospho-HPr then transfers it to the PTS EIIA domain. Functionally, P-Ser-HPr interacts with the catabolite control protein A (CcpA), forming a complex that binds to DNA at the catabolite response elements cre, operator sites preceding a large number of catabolite-regulated genes. Thus, P-Ser-HPr is a corepressor in carbon catabolite repression (CCR), a mechanism that allows bacteria to coordinate and optimize the utilization of available carbon sources. P-Ser-HPr also plays a role in inducer exclusion, in which it probably interacts with several non-PTS permeases and inhibits their transport activity. In Mycoplasma pneumoniae (strain ATCC 29342 / M129 / Subtype 1) (Mycoplasmoides pneumoniae), this protein is Phosphocarrier protein HPr (ptsH).